The sequence spans 84 residues: Large ribosomal subunit protein bL27 (84 aa).

The interval 1-21 (MAHKKGGGSTKNGRDSNPKYL) is disordered.

It belongs to the bacterial ribosomal protein bL27 family.

In Chlorobium phaeovibrioides (strain DSM 265 / 1930) (Prosthecochloris vibrioformis (strain DSM 265)), this protein is Large ribosomal subunit protein bL27.